A 266-amino-acid polypeptide reads, in one-letter code: 4-hydroxy-tetrahydrodipicolinate reductase (266 aa).

NAD(+)-binding positions include 7–12, Glu-33, 96–98, and 120–123; these read GTIGRM, GTT, and APNM. His-153 acts as the Proton donor/acceptor in catalysis. His-154 contributes to the (S)-2,3,4,5-tetrahydrodipicolinate binding site. Residue Lys-157 is the Proton donor of the active site. 163 to 164 is a binding site for (S)-2,3,4,5-tetrahydrodipicolinate; sequence GT.

It belongs to the DapB family.

It is found in the cytoplasm. It catalyses the reaction (S)-2,3,4,5-tetrahydrodipicolinate + NAD(+) + H2O = (2S,4S)-4-hydroxy-2,3,4,5-tetrahydrodipicolinate + NADH + H(+). The catalysed reaction is (S)-2,3,4,5-tetrahydrodipicolinate + NADP(+) + H2O = (2S,4S)-4-hydroxy-2,3,4,5-tetrahydrodipicolinate + NADPH + H(+). The protein operates within amino-acid biosynthesis; L-lysine biosynthesis via DAP pathway; (S)-tetrahydrodipicolinate from L-aspartate: step 4/4. Its function is as follows. Catalyzes the conversion of 4-hydroxy-tetrahydrodipicolinate (HTPA) to tetrahydrodipicolinate. In Polynucleobacter necessarius subsp. necessarius (strain STIR1), this protein is 4-hydroxy-tetrahydrodipicolinate reductase.